Here is a 235-residue protein sequence, read N- to C-terminus: Uridylate kinase (235 aa).

ATP is bound at residue 10–13 (KLSG). Position 52 (G52) interacts with UMP. ATP-binding residues include G53 and R57. UMP contacts are provided by residues D72 and 133-140 (TSNPYFST). ATP-binding residues include T160, Y166, and D169.

It belongs to the UMP kinase family. Homohexamer.

It localises to the cytoplasm. It catalyses the reaction UMP + ATP = UDP + ADP. It participates in pyrimidine metabolism; CTP biosynthesis via de novo pathway; UDP from UMP (UMPK route): step 1/1. With respect to regulation, inhibited by UTP. Catalyzes the reversible phosphorylation of UMP to UDP. The polypeptide is Uridylate kinase (Solibacter usitatus (strain Ellin6076)).